Consider the following 95-residue polypeptide: uncharacterized protein (95 aa).

This is an uncharacterized protein from Escherichia coli O6:H1 (strain CFT073 / ATCC 700928 / UPEC).